Here is a 421-residue protein sequence, read N- to C-terminus: Phosphoribosylamine--glycine ligase (421 aa).

Positions 108–314 (KEIMVKYNVP…FAQNIDDIMM (207 aa)) constitute an ATP-grasp domain. Residue 134 to 195 (IEEQGAPIVV…EEFLDGEEFS (62 aa)) participates in ATP binding. Glu-284 and Asn-286 together coordinate Mg(2+).

The protein belongs to the GARS family. Requires Mg(2+) as cofactor. The cofactor is Mn(2+).

It carries out the reaction 5-phospho-beta-D-ribosylamine + glycine + ATP = N(1)-(5-phospho-beta-D-ribosyl)glycinamide + ADP + phosphate + H(+). It participates in purine metabolism; IMP biosynthesis via de novo pathway; N(1)-(5-phospho-D-ribosyl)glycinamide from 5-phospho-alpha-D-ribose 1-diphosphate: step 2/2. This is Phosphoribosylamine--glycine ligase from Streptococcus pyogenes serotype M3 (strain SSI-1).